Reading from the N-terminus, the 148-residue chain is Ergosterol biosynthetic protein 28 (148 aa).

Residues 1–25 (MFSLQDVITTTKTTLAAMPKGYLPK) lie on the Cytoplasmic side of the membrane. The chain crosses the membrane as a helical span at residues 26 to 46 (WLLFISIVSVFNSIQTYVSGL). Topologically, residues 47-92 (ELTRKVYERKPTETTHLSARTFGTWTFISCVIRFYGAMYLNEPHIF) are lumenal. A helical transmembrane segment spans residues 93-113 (ELVFMSYMVALFHFGSELLIF). Over 114-120 (RTCKLGK) the chain is Cytoplasmic. Residues 121 to 136 (GFMGPLVVSTTSLVWM) form a helical membrane-spanning segment. At 137–148 (YKQREYYTGVAW) the chain is on the lumenal side.

This sequence belongs to the ERG28 family. Heterotetramer of ERG25, ERG26, ERG27 and ERG28. ERG28 acts as a scaffold to tether ERG27 and other 4,4-demethylation-related enzymes, forming a demethylation enzyme complex, in the endoplasmic reticulum. Interacts with ERG25, ERG26 and ERG27. Also interacts with ERG1, ERG3, ERG5, ERG6 and ERG11.

Its subcellular location is the endoplasmic reticulum membrane. In terms of biological role, part of the third module of ergosterol biosynthesis pathway that includes the late steps of the pathway. ERG28 has a role as a scaffold to help anchor the catalytic components of the C-4 demethylation complex ERG25, ERG26 and ERG27 to the endoplasmic reticulum. The third module or late pathway involves the ergosterol synthesis itself through consecutive reactions that mainly occur in the endoplasmic reticulum (ER) membrane. Firstly, the squalene synthase ERG9 catalyzes the condensation of 2 farnesyl pyrophosphate moieties to form squalene, which is the precursor of all steroids. Squalene synthase is crucial for balancing the incorporation of farnesyl diphosphate (FPP) into sterol and nonsterol isoprene synthesis. Secondly, the squalene epoxidase ERG1 catalyzes the stereospecific oxidation of squalene to (S)-2,3-epoxysqualene, which is considered to be a rate-limiting enzyme in steroid biosynthesis. Then, the lanosterol synthase ERG7 catalyzes the cyclization of (S)-2,3 oxidosqualene to lanosterol, a reaction that forms the sterol core. In the next steps, lanosterol is transformed to zymosterol through a complex process involving various demethylation, reduction and desaturation reactions. The lanosterol 14-alpha-demethylase ERG11 (also known as CYP51) catalyzes C14-demethylation of lanosterol to produce 4,4'-dimethyl cholesta-8,14,24-triene-3-beta-ol, which is critical for ergosterol biosynthesis. The C-14 reductase ERG24 reduces the C14=C15 double bond of 4,4-dimethyl-cholesta-8,14,24-trienol to produce 4,4-dimethyl-cholesta-8,24-dienol. 4,4-dimethyl-cholesta-8,24-dienol is substrate of the C-4 demethylation complex ERG25-ERG26-ERG27 in which ERG25 catalyzes the three-step monooxygenation required for the demethylation of 4,4-dimethyl and 4alpha-methylsterols, ERG26 catalyzes the oxidative decarboxylation that results in a reduction of the 3-beta-hydroxy group at the C-3 carbon to an oxo group, and ERG27 is responsible for the reduction of the keto group on the C-3. ERG28 has a role as a scaffold to help anchor ERG25, ERG26 and ERG27 to the endoplasmic reticulum and ERG29 regulates the activity of the iron-containing C4-methylsterol oxidase ERG25. Then, the sterol 24-C-methyltransferase ERG6 catalyzes the methyl transfer from S-adenosyl-methionine to the C-24 of zymosterol to form fecosterol. The C-8 sterol isomerase ERG2 catalyzes the reaction which results in unsaturation at C-7 in the B ring of sterols and thus converts fecosterol to episterol. The sterol-C5-desaturase ERG3 then catalyzes the introduction of a C-5 double bond in the B ring to produce 5-dehydroepisterol. The C-22 sterol desaturase ERG5 further converts 5-dehydroepisterol into ergosta-5,7,22,24(28)-tetraen-3beta-ol by forming the C-22(23) double bond in the sterol side chain. Finally, ergosta-5,7,22,24(28)-tetraen-3beta-ol is substrate of the C-24(28) sterol reductase ERG4 to produce ergosterol. The sequence is that of Ergosterol biosynthetic protein 28 from Saccharomyces cerevisiae (strain ATCC 204508 / S288c) (Baker's yeast).